We begin with the raw amino-acid sequence, 512 residues long: 2-isopropylmalate synthase (512 aa).

The Pyruvate carboxyltransferase domain maps to 4–266; sequence IEIFDTTLRD…TTKLNLKEIA (263 aa). Mn(2+) contacts are provided by Asp-13, His-201, His-203, and Asn-237. Residues 390–512 form a regulatory domain region; sequence QLESVQLAYG…GEPTPVSATI (123 aa).

The protein belongs to the alpha-IPM synthase/homocitrate synthase family. LeuA type 1 subfamily. As to quaternary structure, homodimer. The cofactor is Mn(2+).

Its subcellular location is the cytoplasm. The catalysed reaction is 3-methyl-2-oxobutanoate + acetyl-CoA + H2O = (2S)-2-isopropylmalate + CoA + H(+). The protein operates within amino-acid biosynthesis; L-leucine biosynthesis; L-leucine from 3-methyl-2-oxobutanoate: step 1/4. Its function is as follows. Catalyzes the condensation of the acetyl group of acetyl-CoA with 3-methyl-2-oxobutanoate (2-ketoisovalerate) to form 3-carboxy-3-hydroxy-4-methylpentanoate (2-isopropylmalate). The chain is 2-isopropylmalate synthase from Brevibacillus brevis (strain 47 / JCM 6285 / NBRC 100599).